Reading from the N-terminus, the 916-residue chain is Protein translocase subunit SecA (916 aa).

ATP is bound by residues Gln-87, 105–109, and Asp-507; that span reads GEGKT. Zn(2+) contacts are provided by Cys-900, Cys-902, Cys-911, and His-912.

Belongs to the SecA family. Monomer and homodimer. Part of the essential Sec protein translocation apparatus which comprises SecA, SecYEG and auxiliary proteins SecDF-YajC and YidC. Zn(2+) serves as cofactor.

Its subcellular location is the cell inner membrane. The protein localises to the cytoplasm. The catalysed reaction is ATP + H2O + cellular proteinSide 1 = ADP + phosphate + cellular proteinSide 2.. In terms of biological role, part of the Sec protein translocase complex. Interacts with the SecYEG preprotein conducting channel. Has a central role in coupling the hydrolysis of ATP to the transfer of proteins into and across the cell membrane, serving both as a receptor for the preprotein-SecB complex and as an ATP-driven molecular motor driving the stepwise translocation of polypeptide chains across the membrane. The sequence is that of Protein translocase subunit SecA from Neisseria meningitidis serogroup B (strain ATCC BAA-335 / MC58).